We begin with the raw amino-acid sequence, 196 residues long: Mpv17-like protein (196 aa).

The Cytoplasmic portion of the chain corresponds to 1–16; the sequence is MVSWWQALTRAAGRYP. Residues 16-55 form a targeting to peroxisomes region; it reads PWPANVLLYAGFFSGGDALQQVLRGGPADWQHTRHVATVA. The helical transmembrane segment at 17–34 threads the bilayer; sequence WPANVLLYAGFFSGGDAL. At 35 to 50 the chain is on the lumenal side; the sequence is QQVLRGGPADWQHTRH. A helical transmembrane segment spans residues 51-67; it reads VATVAVAFHANLNYVWL. At 68–90 the chain is on the cytoplasmic side; the sequence is NLLERALPGRAPRTILAKVLCDQ. The helical transmembrane segment at 91 to 108 threads the bilayer; sequence ALGGPVYVSTFYAGMSIL. Topologically, residues 109–150 are lumenal; that stretch reads QGKDDIFLDMRQKFWNTYKSGLMYWPFVQLINFSLIPIRWRT. The helical transmembrane segment at 151 to 167 threads the bilayer; sequence AYTGLCGFLWATFLCFS. Topologically, residues 168 to 196 are cytoplasmic; sequence QQEGDGTFKSAFTFRRIKVTNEVEKPSEK.

It belongs to the peroxisomal membrane protein PXMP2/4 family.

Its subcellular location is the peroxisome membrane. Participates in reactive oxygen species metabolism by up- or down-regulation of the genes of antioxidant enzymes. Protective against the mitochondrial apoptotic cascade. The polypeptide is Mpv17-like protein (MPV17L) (Bos taurus (Bovine)).